An 85-amino-acid chain; its full sequence is Large ribosomal subunit protein bL27 (85 aa).

Residues 1–21 (MAHKKAGGSSRNGRDSEAKRL) are disordered.

It belongs to the bacterial ribosomal protein bL27 family.

This chain is Large ribosomal subunit protein bL27, found in Aeromonas hydrophila subsp. hydrophila (strain ATCC 7966 / DSM 30187 / BCRC 13018 / CCUG 14551 / JCM 1027 / KCTC 2358 / NCIMB 9240 / NCTC 8049).